Consider the following 241-residue polypeptide: Adenosylcobinamide-GDP ribazoletransferase (241 aa).

The next 4 helical transmembrane spans lie at 34 to 54 (LGLP…AWAF), 108 to 128 (VGGL…FGWI), 184 to 206 (LPFS…WTCL), and 220 to 240 (FLGA…SSLP).

Belongs to the CobS family. Requires Mg(2+) as cofactor.

Its subcellular location is the cell membrane. It carries out the reaction alpha-ribazole + adenosylcob(III)inamide-GDP = adenosylcob(III)alamin + GMP + H(+). The enzyme catalyses alpha-ribazole 5'-phosphate + adenosylcob(III)inamide-GDP = adenosylcob(III)alamin 5'-phosphate + GMP + H(+). Its pathway is cofactor biosynthesis; adenosylcobalamin biosynthesis; adenosylcobalamin from cob(II)yrinate a,c-diamide: step 7/7. Joins adenosylcobinamide-GDP and alpha-ribazole to generate adenosylcobalamin (Ado-cobalamin). Also synthesizes adenosylcobalamin 5'-phosphate from adenosylcobinamide-GDP and alpha-ribazole 5'-phosphate. The polypeptide is Adenosylcobinamide-GDP ribazoletransferase (Methanopyrus kandleri (strain AV19 / DSM 6324 / JCM 9639 / NBRC 100938)).